The chain runs to 194 residues: Probable thymidylate kinase (194 aa).

9–16 (GIDGVGKS) is an ATP binding site.

The protein belongs to the thymidylate kinase family.

It catalyses the reaction dTMP + ATP = dTDP + ADP. The polypeptide is Probable thymidylate kinase (Methanopyrus kandleri (strain AV19 / DSM 6324 / JCM 9639 / NBRC 100938)).